Consider the following 219-residue polypeptide: Ribose-5-phosphate isomerase A (219 aa).

Substrate is bound by residues S28–T31, D81–D84, and K94–G97. Catalysis depends on E103, which acts as the Proton acceptor. K121 contacts substrate.

This sequence belongs to the ribose 5-phosphate isomerase family. In terms of assembly, homodimer.

It catalyses the reaction aldehydo-D-ribose 5-phosphate = D-ribulose 5-phosphate. Its pathway is carbohydrate degradation; pentose phosphate pathway; D-ribose 5-phosphate from D-ribulose 5-phosphate (non-oxidative stage): step 1/1. In terms of biological role, catalyzes the reversible conversion of ribose-5-phosphate to ribulose 5-phosphate. This Haemophilus influenzae (strain ATCC 51907 / DSM 11121 / KW20 / Rd) protein is Ribose-5-phosphate isomerase A.